The following is a 241-amino-acid chain: tRNA pseudouridine synthase A (241 aa).

Residue D53 is the Nucleophile of the active site. Substrate is bound at residue Y110.

The protein belongs to the tRNA pseudouridine synthase TruA family. In terms of assembly, homodimer.

The enzyme catalyses uridine(38/39/40) in tRNA = pseudouridine(38/39/40) in tRNA. In terms of biological role, formation of pseudouridine at positions 38, 39 and 40 in the anticodon stem and loop of transfer RNAs. This is tRNA pseudouridine synthase A from Malacoplasma penetrans (strain HF-2) (Mycoplasma penetrans).